The primary structure comprises 66 residues: Large ribosomal subunit protein bL33c (66 aa).

It belongs to the bacterial ribosomal protein bL33 family.

The protein resides in the plastid. It localises to the chloroplast. This chain is Large ribosomal subunit protein bL33c, found in Nandina domestica (Heavenly bamboo).